The chain runs to 460 residues: tRNA modification GTPase MnmE (460 aa).

Positions 29, 91, and 132 each coordinate (6S)-5-formyl-5,6,7,8-tetrahydrofolate. The region spanning 227–383 is the TrmE-type G domain; the sequence is GISIALIGKT…LIDTIIKKCG (157 aa). Residue Asn237 coordinates K(+). GTP-binding positions include 237–242, 256–262, and 281–284; these read NVGKSS, TNIPGTT, and DTAG. Ser241 serves as a coordination point for Mg(2+). Residues Thr256, Ile258, and Thr261 each contribute to the K(+) site. A Mg(2+)-binding site is contributed by Thr262. Lys460 is a binding site for (6S)-5-formyl-5,6,7,8-tetrahydrofolate.

Belongs to the TRAFAC class TrmE-Era-EngA-EngB-Septin-like GTPase superfamily. TrmE GTPase family. As to quaternary structure, homodimer. Heterotetramer of two MnmE and two MnmG subunits. The cofactor is K(+).

The protein localises to the cytoplasm. Exhibits a very high intrinsic GTPase hydrolysis rate. Involved in the addition of a carboxymethylaminomethyl (cmnm) group at the wobble position (U34) of certain tRNAs, forming tRNA-cmnm(5)s(2)U34. The chain is tRNA modification GTPase MnmE from Prochlorococcus marinus (strain MIT 9301).